The chain runs to 458 residues: MGIKGLTGLLNEHAPNSIKEHDIKTLFGRKVAIDASMSIYQFLIAVRQRDGEMLTNDAGETTSHLMGFFYRTIRIVENGIKPAYVFDGKPPELKKGVLSKRFEKREEAKEEGEEAKEIGTAEDVDRFSRRTVKVTKQHNEECQKLLRLMGVPCVIAPSEAEAQCAELARGGKVYAAGSEDMDTLTFNAPILFRHLTFSEAKKQPISEINLEAALKGLDMDMSQFVDLCILLGCDYLEPIKGVGPKSALKLIREFGGLKEVVEHLREKAAARKAEAEEEDEEEAEEPAPTSDVEMPDDEDGEKDSDDEEEAERRKKAEAAKKKKAQEKAKSAKKGKGKGKGGIQIPDEWPWEEAKQIFLKPDVIPADQVELEWKNPDVEGLVQFLVTEKGFSEERVRKGAEKLTKFLNAKQQGRLDGFFTVKPKQAPPPAAKGKGAASKGTKRKGEDKAEGSGKKAKKK.

Residues 1 to 105 (MGIKGLTGLL…GVLSKRFEKR (105 aa)) are N-domain. Aspartate 34 provides a ligand contact to Mg(2+). Arginine 47 and arginine 71 together coordinate DNA. Residues aspartate 87, glutamate 159, glutamate 161, aspartate 180, and aspartate 182 each coordinate Mg(2+). The interval 123-254 (DVDRFSRRTV…KSALKLIREF (132 aa)) is I-domain. Residue glutamate 159 participates in DNA binding. Positions 232 and 234 each coordinate DNA. Aspartate 234 contributes to the Mg(2+) binding site. Disordered regions lie at residues 268–347 (AAAR…IPDE) and 416–458 (GFFT…AKKK). 2 stretches are compositionally biased toward acidic residues: residues 275–285 (AEEEDEEEAEE) and 293–309 (EMPD…DEEE). The span at 310 to 329 (AERRKKAEAAKKKKAQEKAK) shows a compositional bias: basic and acidic residues. Residues 410–418 (QQGRLDGFF) form an interaction with PCNA region. Over residues 442–452 (RKGEDKAEGSG) the composition is skewed to basic and acidic residues.

It belongs to the XPG/RAD2 endonuclease family. FEN1 subfamily. In terms of assembly, interacts with PCNA. Three molecules of FEN1 bind to one PCNA trimer with each molecule binding to one PCNA monomer. PCNA stimulates the nuclease activity without altering cleavage specificity. Mg(2+) serves as cofactor. In terms of processing, phosphorylated. Phosphorylation upon DNA damage induces relocalization to the nuclear plasma.

The protein resides in the nucleus. Its subcellular location is the nucleolus. It is found in the nucleoplasm. It localises to the mitochondrion. Functionally, structure-specific nuclease with 5'-flap endonuclease and 5'-3' exonuclease activities involved in DNA replication and repair. During DNA replication, cleaves the 5'-overhanging flap structure that is generated by displacement synthesis when DNA polymerase encounters the 5'-end of a downstream Okazaki fragment. It enters the flap from the 5'-end and then tracks to cleave the flap base, leaving a nick for ligation. Also involved in the long patch base excision repair (LP-BER) pathway, by cleaving within the apurinic/apyrimidinic (AP) site-terminated flap. Acts as a genome stabilization factor that prevents flaps from equilibrating into structures that lead to duplications and deletions. Also possesses 5'-3' exonuclease activity on nicked or gapped double-stranded DNA, and exhibits RNase H activity. Also involved in replication and repair of rDNA and in repairing mitochondrial DNA. This Coprinopsis cinerea (strain Okayama-7 / 130 / ATCC MYA-4618 / FGSC 9003) (Inky cap fungus) protein is Flap endonuclease 1.